The sequence spans 256 residues: Reaction center protein M chain (256 aa).

A run of 3 helical transmembrane segments spans residues 52-78 (PGVA…LASV), 110-139 (EGGW…ARAL), and 142-167 (GTHM…PLLL). 2 residues coordinate (7R,8Z)-bacteriochlorophyll b: histidine 181 and histidine 201. A helical transmembrane segment spans residues 197 to 225 (YNPFHMLSIAFLYGSAVLFAMHGATILAV). The Fe cation site is built by histidine 218 and glutamate 233. Residue tryptophan 251 participates in a ubiquinone binding.

The protein belongs to the reaction center PufL/M/PsbA/D family. As to quaternary structure, reaction center is composed of four bacteriochlorophylls, two bacteriopheophytins, two ubiquinones, one iron, and two highly hydrophobic polypeptide chains (designated L and M).

The protein resides in the cellular chromatophore membrane. Functionally, the reaction center is a membrane-bound complex that mediates the initial photochemical event in the electron transfer process of photosynthesis. This chain is Reaction center protein M chain (pufM), found in Pararhodospirillum photometricum (Rhodospirillum photometricum).